A 206-amino-acid chain; its full sequence is MIKEKGILFILSGPSGVGKGTVRKKLFEEETDLQYSISMTTRDRRPGEVDGVDYFYKTKEEFEQLIKDGQLLEYAQYVNNYYGTPRNYVEETLENGQDVFLEIEVQGALQVKENFPEGVFIFLFPPSLDELKNRIVSRGTESQELVLNRLKEARNEIEMMDAYDYVVVNDKVQHAVDKVKTIIKSEHLKRERIAKQYKKILEDGLS.

The Guanylate kinase-like domain maps to 6–184 (GILFILSGPS…AVDKVKTIIK (179 aa)). 13–20 (GPSGVGKG) lines the ATP pocket.

Belongs to the guanylate kinase family.

It localises to the cytoplasm. The catalysed reaction is GMP + ATP = GDP + ADP. Functionally, essential for recycling GMP and indirectly, cGMP. In Oceanobacillus iheyensis (strain DSM 14371 / CIP 107618 / JCM 11309 / KCTC 3954 / HTE831), this protein is Guanylate kinase.